Reading from the N-terminus, the 40-residue chain is Photosystem II reaction center protein Psb30 (40 aa).

Residues 12–32 (VIFQLTSVALIIIAGPAVIFV) form a helical membrane-spanning segment.

It belongs to the Psb30/Ycf12 family. In terms of assembly, PSII is composed of 1 copy each of membrane proteins PsbA, PsbB, PsbC, PsbD, PsbE, PsbF, PsbH, PsbI, PsbJ, PsbK, PsbL, PsbM, PsbT, PsbX, PsbY, PsbZ, Psb30/Ycf12, peripheral proteins PsbO, CyanoQ (PsbQ), PsbU, PsbV and a large number of cofactors. It forms dimeric complexes.

The protein resides in the cellular thylakoid membrane. A core subunit of photosystem II (PSII), probably helps stabilize the reaction center. This chain is Photosystem II reaction center protein Psb30, found in Nostoc sp. (strain PCC 7120 / SAG 25.82 / UTEX 2576).